The primary structure comprises 414 residues: Multifunctional CCA protein (414 aa).

Residues glycine 8 and arginine 11 each contribute to the ATP site. Positions 8 and 11 each coordinate CTP. Mg(2+) contacts are provided by glutamate 21 and aspartate 23. Arginine 91, arginine 137, and arginine 140 together coordinate ATP. 3 residues coordinate CTP: arginine 91, arginine 137, and arginine 140. One can recognise an HD domain in the interval 228-329; sequence TGIHTLMTLA…LKLFDAIDVW (102 aa).

The protein belongs to the tRNA nucleotidyltransferase/poly(A) polymerase family. Bacterial CCA-adding enzyme type 1 subfamily. Monomer. Can also form homodimers and oligomers. Requires Mg(2+) as cofactor. Ni(2+) serves as cofactor.

The catalysed reaction is a tRNA precursor + 2 CTP + ATP = a tRNA with a 3' CCA end + 3 diphosphate. It carries out the reaction a tRNA with a 3' CCA end + 2 CTP + ATP = a tRNA with a 3' CCACCA end + 3 diphosphate. In terms of biological role, catalyzes the addition and repair of the essential 3'-terminal CCA sequence in tRNAs without using a nucleic acid template. Adds these three nucleotides in the order of C, C, and A to the tRNA nucleotide-73, using CTP and ATP as substrates and producing inorganic pyrophosphate. tRNA 3'-terminal CCA addition is required both for tRNA processing and repair. Also involved in tRNA surveillance by mediating tandem CCA addition to generate a CCACCA at the 3' terminus of unstable tRNAs. While stable tRNAs receive only 3'-terminal CCA, unstable tRNAs are marked with CCACCA and rapidly degraded. This chain is Multifunctional CCA protein, found in Yersinia enterocolitica serotype O:8 / biotype 1B (strain NCTC 13174 / 8081).